The following is a 410-amino-acid chain: Peptidase T (410 aa).

H79 lines the Zn(2+) pocket. D81 is an active-site residue. D142 serves as a coordination point for Zn(2+). The Proton acceptor role is filled by E176. 3 residues coordinate Zn(2+): E177, D199, and H381.

This sequence belongs to the peptidase M20B family. It depends on Zn(2+) as a cofactor.

Its subcellular location is the cytoplasm. The enzyme catalyses Release of the N-terminal residue from a tripeptide.. Its function is as follows. Cleaves the N-terminal amino acid of tripeptides. The polypeptide is Peptidase T (Bacillus pumilus (strain SAFR-032)).